Consider the following 467-residue polypeptide: 3-isopropylmalate dehydratase large subunit (467 aa).

Residues Cys348, Cys409, and Cys412 each contribute to the [4Fe-4S] cluster site.

This sequence belongs to the aconitase/IPM isomerase family. LeuC type 1 subfamily. Heterodimer of LeuC and LeuD. [4Fe-4S] cluster is required as a cofactor.

It carries out the reaction (2R,3S)-3-isopropylmalate = (2S)-2-isopropylmalate. Its pathway is amino-acid biosynthesis; L-leucine biosynthesis; L-leucine from 3-methyl-2-oxobutanoate: step 2/4. In terms of biological role, catalyzes the isomerization between 2-isopropylmalate and 3-isopropylmalate, via the formation of 2-isopropylmaleate. In Thiobacillus denitrificans (strain ATCC 25259 / T1), this protein is 3-isopropylmalate dehydratase large subunit.